Consider the following 259-residue polypeptide: MIPLTPLFSRYKDSYLLYSFRLIDLLRASKSTHLTKLLSSQATYLYHFACLMKYKDIQKYEVQQLIEWAINASPDMDLQQFRIEFMDKTTELNLRSCQPKSFTYTFTTIWDTMHFLSLIIDDMVYTRDKSSLDFVMQQLKTMKVLFYNVFFILQCAMCRDHYMNVKGFIIYHIELIEIALDKEKYGTDITFVDSYQQETAGADVAVVSNNMLMKNLMAYVSMTFHNHINDYKWIQRNKKPPAHYERMTWGEYKKLLNLQ.

The protein belongs to the baculoviridae p33 family. As to quaternary structure, homodimer.

Its subcellular location is the host cytoplasm. The protein resides in the host nucleus. The catalysed reaction is 2 R'C(R)SH + O2 = R'C(R)S-S(R)CR' + H2O2. Its function is as follows. Functional FAD-linked sulfhydryl oxidase that is required for infectious budded virion (BV) production and for the formation of enveloped occluded virion (ODV). This is FAD-linked sulfhydryl oxidase (P33) from Lepidoptera (butterflies and moths).